The sequence spans 197 residues: Glycerol-3-phosphate acyltransferase (197 aa).

5 consecutive transmembrane segments (helical) span residues 1 to 21 (MNIL…GFLI), 78 to 98 (LIEV…IWLG), 111 to 131 (MFLA…LIVL), 136 to 155 (FVSL…MFFY), and 159 to 176 (FIHT…LVIW).

The protein belongs to the PlsY family. In terms of assembly, probably interacts with PlsX.

It localises to the cell inner membrane. It catalyses the reaction an acyl phosphate + sn-glycerol 3-phosphate = a 1-acyl-sn-glycero-3-phosphate + phosphate. It participates in lipid metabolism; phospholipid metabolism. Functionally, catalyzes the transfer of an acyl group from acyl-phosphate (acyl-PO(4)) to glycerol-3-phosphate (G3P) to form lysophosphatidic acid (LPA). This enzyme utilizes acyl-phosphate as fatty acyl donor, but not acyl-CoA or acyl-ACP. The protein is Glycerol-3-phosphate acyltransferase of Prochlorococcus marinus (strain MIT 9215).